A 149-amino-acid chain; its full sequence is Nucleoside diphosphate kinase (149 aa).

The ATP site is built by Lys-9, Phe-57, Arg-85, Thr-91, Arg-102, and Asn-112. His-115 functions as the Pros-phosphohistidine intermediate in the catalytic mechanism.

Belongs to the NDK family. Mg(2+) serves as cofactor.

The protein localises to the cytoplasm. It carries out the reaction a 2'-deoxyribonucleoside 5'-diphosphate + ATP = a 2'-deoxyribonucleoside 5'-triphosphate + ADP. The catalysed reaction is a ribonucleoside 5'-diphosphate + ATP = a ribonucleoside 5'-triphosphate + ADP. Functionally, major role in the synthesis of nucleoside triphosphates other than ATP. The ATP gamma phosphate is transferred to the NDP beta phosphate via a ping-pong mechanism, using a phosphorylated active-site intermediate. The polypeptide is Nucleoside diphosphate kinase (Methanocorpusculum labreanum (strain ATCC 43576 / DSM 4855 / Z)).